Here is a 212-residue protein sequence, read N- to C-terminus: Large ribosomal subunit protein uL4 (212 aa).

Residues 54–65 (SQKSRSDVSGSN) show a composition bias toward polar residues. The disordered stretch occupies residues 54–85 (SQKSRSDVSGSNKKPWRQKGTGRARSGSVKSP).

This sequence belongs to the universal ribosomal protein uL4 family. Part of the 50S ribosomal subunit.

One of the primary rRNA binding proteins, this protein initially binds near the 5'-end of the 23S rRNA. It is important during the early stages of 50S assembly. It makes multiple contacts with different domains of the 23S rRNA in the assembled 50S subunit and ribosome. Its function is as follows. Forms part of the polypeptide exit tunnel. This is Large ribosomal subunit protein uL4 from Blochmanniella floridana.